Reading from the N-terminus, the 182-residue chain is uncharacterized protein (182 aa).

Disordered regions lie at residues 1-49 (MAAP…DGGS) and 126-171 (QGGH…VHAQ). Positions 17-39 (ELLEKAARLERGPPPRGDPEAVG) are enriched in basic and acidic residues.

This is an uncharacterized protein from Homo sapiens (Human).